A 1073-amino-acid polypeptide reads, in one-letter code: Probable inorganic carbon transporter subunit DabA (1073 aa).

Positions 551, 553, 742, and 757 each coordinate Zn(2+).

It belongs to the inorganic carbon transporter (TC 9.A.2) DabA family. As to quaternary structure, forms a complex with DabB. Requires Zn(2+) as cofactor.

Its subcellular location is the cell inner membrane. Part of an energy-coupled inorganic carbon pump. The sequence is that of Probable inorganic carbon transporter subunit DabA from Methylococcus capsulatus (strain ATCC 33009 / NCIMB 11132 / Bath).